The primary structure comprises 695 residues: Protein arginine N-methyltransferase 7 (695 aa).

SAM-dependent MTase PRMT-type domains lie at 14–345 (SVEW…YCVW) and 358–684 (RVHP…ITMD). Omega-N-methylarginine is present on Arg-32. Catalysis depends on residues Glu-144 and Glu-153.

The protein belongs to the class I-like SAM-binding methyltransferase superfamily. Protein arginine N-methyltransferase family. PRMT7 subfamily. In terms of assembly, homodimer and heterodimer. Interacts with CTCFL, PRMT5 and SNRPD3.

The protein localises to the cytoplasm. The protein resides in the cytosol. Its subcellular location is the nucleus. It carries out the reaction L-arginyl-[protein] + S-adenosyl-L-methionine = N(omega)-methyl-L-arginyl-[protein] + S-adenosyl-L-homocysteine + H(+). Its function is as follows. Arginine methyltransferase that can both catalyze the formation of omega-N monomethylarginine (MMA) and symmetrical dimethylarginine (sDMA), with a preference for the formation of MMA. Specifically mediates the symmetrical dimethylation of arginine residues in the small nuclear ribonucleoproteins Sm D1 (SNRPD1) and Sm D3 (SNRPD3); such methylation being required for the assembly and biogenesis of snRNP core particles. Specifically mediates the symmetric dimethylation of histone H4 'Arg-3' to form H4R3me2s. Plays a role in gene imprinting by being recruited by CTCFL at the H19 imprinted control region (ICR) and methylating histone H4 to form H4R3me2s, possibly leading to recruit DNA methyltransferases at these sites. May also play a role in embryonic stem cell (ESC) pluripotency. Also able to mediate the arginine methylation of histone H2A and myelin basic protein (MBP) in vitro; the relevance of such results is however unclear in vivo. The polypeptide is Protein arginine N-methyltransferase 7 (PRMT7) (Bos taurus (Bovine)).